Consider the following 200-residue polypeptide: Small ribosomal subunit protein uS4 (200 aa).

Residues T20–R41 are disordered. Residues S92 to K152 enclose the S4 RNA-binding domain.

This sequence belongs to the universal ribosomal protein uS4 family. As to quaternary structure, part of the 30S ribosomal subunit. Contacts protein S5. The interaction surface between S4 and S5 is involved in control of translational fidelity.

Functionally, one of the primary rRNA binding proteins, it binds directly to 16S rRNA where it nucleates assembly of the body of the 30S subunit. In terms of biological role, with S5 and S12 plays an important role in translational accuracy. This Oceanobacillus iheyensis (strain DSM 14371 / CIP 107618 / JCM 11309 / KCTC 3954 / HTE831) protein is Small ribosomal subunit protein uS4.